We begin with the raw amino-acid sequence, 610 residues long: UvrABC system protein C (610 aa).

Positions 16-94 (SQPGVYRMYD…IKLYQPRYNV (79 aa)) constitute a GIY-YIG domain. Residues 204–239 (DQVLTQLIARMEKASQDLAFEEAARIRDQIQAVRRV) form the UVR domain.

The protein belongs to the UvrC family. Interacts with UvrB in an incision complex.

It localises to the cytoplasm. Its function is as follows. The UvrABC repair system catalyzes the recognition and processing of DNA lesions. UvrC both incises the 5' and 3' sides of the lesion. The N-terminal half is responsible for the 3' incision and the C-terminal half is responsible for the 5' incision. In Salmonella schwarzengrund (strain CVM19633), this protein is UvrABC system protein C.